A 342-amino-acid chain; its full sequence is Tetraacyldisaccharide 4'-kinase (342 aa).

68–75 (TVGGTGKT) is an ATP binding site.

This sequence belongs to the LpxK family.

The catalysed reaction is a lipid A disaccharide + ATP = a lipid IVA + ADP + H(+). The protein operates within glycolipid biosynthesis; lipid IV(A) biosynthesis; lipid IV(A) from (3R)-3-hydroxytetradecanoyl-[acyl-carrier-protein] and UDP-N-acetyl-alpha-D-glucosamine: step 6/6. Its function is as follows. Transfers the gamma-phosphate of ATP to the 4'-position of a tetraacyldisaccharide 1-phosphate intermediate (termed DS-1-P) to form tetraacyldisaccharide 1,4'-bis-phosphate (lipid IVA). The protein is Tetraacyldisaccharide 4'-kinase of Burkholderia thailandensis (strain ATCC 700388 / DSM 13276 / CCUG 48851 / CIP 106301 / E264).